Consider the following 256-residue polypeptide: Thiazole synthase (256 aa).

Residue Lys95 is the Schiff-base intermediate with DXP of the active site. 1-deoxy-D-xylulose 5-phosphate is bound by residues Gly156, 182 to 183 (AG), and 204 to 205 (NT).

Belongs to the ThiG family. Homotetramer. Forms heterodimers with either ThiH or ThiS.

The protein localises to the cytoplasm. The enzyme catalyses [ThiS sulfur-carrier protein]-C-terminal-Gly-aminoethanethioate + 2-iminoacetate + 1-deoxy-D-xylulose 5-phosphate = [ThiS sulfur-carrier protein]-C-terminal Gly-Gly + 2-[(2R,5Z)-2-carboxy-4-methylthiazol-5(2H)-ylidene]ethyl phosphate + 2 H2O + H(+). It functions in the pathway cofactor biosynthesis; thiamine diphosphate biosynthesis. Catalyzes the rearrangement of 1-deoxy-D-xylulose 5-phosphate (DXP) to produce the thiazole phosphate moiety of thiamine. Sulfur is provided by the thiocarboxylate moiety of the carrier protein ThiS. In vitro, sulfur can be provided by H(2)S. In Cronobacter sakazakii (strain ATCC BAA-894) (Enterobacter sakazakii), this protein is Thiazole synthase.